A 476-amino-acid polypeptide reads, in one-letter code: Cytosolic iron-sulfur assembly component 3 (476 aa).

N-acetylalanine is present on Ala-2. [4Fe-4S] cluster contacts are provided by Cys-24, Cys-71, Cys-74, Cys-77, Cys-190, Cys-246, Cys-395, and Cys-399.

This sequence belongs to the NARF family. As to quaternary structure, external component of the CIA complex. In the CIA complex, interacts directly with CIAO1 and MMS19.

In terms of biological role, component of the cytosolic iron-sulfur protein assembly (CIA) complex, a multiprotein complex that mediates the incorporation of iron-sulfur cluster into extramitochondrial Fe/S proteins. Seems to negatively regulate the level of HIF1A expression, although this effect could be indirect. The polypeptide is Cytosolic iron-sulfur assembly component 3 (Pongo abelii (Sumatran orangutan)).